The primary structure comprises 171 residues: 3-hydroxydecanoyl-[acyl-carrier-protein] dehydratase (171 aa).

His-70 is an active-site residue.

The protein belongs to the thioester dehydratase family. FabA subfamily. Homodimer.

It is found in the cytoplasm. It catalyses the reaction a (3R)-hydroxyacyl-[ACP] = a (2E)-enoyl-[ACP] + H2O. The enzyme catalyses (3R)-hydroxydecanoyl-[ACP] = (2E)-decenoyl-[ACP] + H2O. The catalysed reaction is (2E)-decenoyl-[ACP] = (3Z)-decenoyl-[ACP]. The protein operates within lipid metabolism; fatty acid biosynthesis. Its function is as follows. Necessary for the introduction of cis unsaturation into fatty acids. Catalyzes the dehydration of (3R)-3-hydroxydecanoyl-ACP to E-(2)-decenoyl-ACP and then its isomerization to Z-(3)-decenoyl-ACP. Can catalyze the dehydratase reaction for beta-hydroxyacyl-ACPs with saturated chain lengths up to 16:0, being most active on intermediate chain length. In Shewanella frigidimarina (strain NCIMB 400), this protein is 3-hydroxydecanoyl-[acyl-carrier-protein] dehydratase.